A 313-amino-acid chain; its full sequence is Apolipoprotein E (313 aa).

A signal peptide spans 1–18 (MKVLWVALVITLLAGCQA). Repeat copies occupy residues 79 to 100 (VLMD…EQLG), 101 to 122 (PIAQ…ARLA), 123 to 144 (SDME…AVMG), 145 to 166 (QTTD…KRLL), 167 to 188 (RDAE…EGSE), 189 to 209 (RSVS…RGRA), 210 to 229 (GTLA…QKLR), and 230 to 251 (GRVE…EQLE). The interval 79–251 (VLMDETMKEV…HLEEIREQLE (173 aa)) is 8 X 22 AA approximate tandem repeats. Residues 157 to 167 (HLRKLRKRLLR) form an LDL and other lipoprotein receptors binding region. 161-164 (LRKR) lines the heparin pocket. The tract at residues 209–286 (AGTLASQTLR…SWFEPLVEDM (78 aa)) is lipid-binding and lipoprotein association. 225-232 (HQKLRGRV) is a heparin binding site. The interval 262–313 (SQIRLQAEAFQARLKSWFEPLVEDMQRQWAGLVEKVQLAMATSSTSAPSENH) is homooligomerization. The interval 274–286 (RLKSWFEPLVEDM) is specificity for association with VLDL.

This sequence belongs to the apolipoprotein A1/A4/E family. In terms of assembly, homotetramer. May interact with ABCA1; functionally associated with ABCA1 in the biogenesis of HDLs. May interact with APP/A4 amyloid-beta peptide; the interaction is extremely stable in vitro but its physiological significance is unclear. May interact with MAPT. May interact with MAP2. In the cerebrospinal fluid, interacts with secreted SORL1. Interacts with PMEL; this allows the loading of PMEL luminal fragment on ILVs to induce fibril nucleation. Post-translationally, APOE exists as multiple glycosylated and sialylated glycoforms within cells and in plasma. The extent of glycosylation and sialylation are tissue and context specific. In terms of processing, glycated in plasma VLDL. Phosphorylated by FAM20C in the extracellular medium.

It is found in the secreted. The protein resides in the extracellular space. It localises to the extracellular matrix. The protein localises to the extracellular vesicle. Its subcellular location is the endosome. It is found in the multivesicular body. APOE is an apolipoprotein, a protein associating with lipid particles, that mainly functions in lipoprotein-mediated lipid transport between organs via the plasma and interstitial fluids. APOE is a core component of plasma lipoproteins and is involved in their production, conversion and clearance. Apolipoproteins are amphipathic molecules that interact both with lipids of the lipoprotein particle core and the aqueous environment of the plasma. As such, APOE associates with chylomicrons, chylomicron remnants, very low density lipoproteins (VLDL) and intermediate density lipoproteins (IDL) but shows a preferential binding to high-density lipoproteins (HDL). It also binds a wide range of cellular receptors including the LDL receptor/LDLR and the very low-density lipoprotein receptor/VLDLR that mediate the cellular uptake of the APOE-containing lipoprotein particles. Finally, APOE also has a heparin-binding activity and binds heparan-sulfate proteoglycans on the surface of cells, a property that supports the capture and the receptor-mediated uptake of APOE-containing lipoproteins by cells. This is Apolipoprotein E (APOE) from Balaenoptera acutorostrata scammoni (North Pacific minke whale).